A 61-amino-acid chain; its full sequence is uncharacterized protein (61 aa).

This is an uncharacterized protein from Acidianus convivator (ATV).